The primary structure comprises 158 residues: Methylated-DNA--protein-cysteine methyltransferase (158 aa).

Residue Cys126 is the Nucleophile; methyl group acceptor of the active site.

The protein belongs to the MGMT family.

It localises to the cytoplasm. It catalyses the reaction a 6-O-methyl-2'-deoxyguanosine in DNA + L-cysteinyl-[protein] = S-methyl-L-cysteinyl-[protein] + a 2'-deoxyguanosine in DNA. It carries out the reaction a 4-O-methyl-thymidine in DNA + L-cysteinyl-[protein] = a thymidine in DNA + S-methyl-L-cysteinyl-[protein]. Involved in the cellular defense against the biological effects of O6-methylguanine (O6-MeG) and O4-methylthymine (O4-MeT) in DNA. Repairs the methylated nucleobase in DNA by stoichiometrically transferring the methyl group to a cysteine residue in the enzyme. This is a suicide reaction: the enzyme is irreversibly inactivated. This Methanosarcina mazei (strain ATCC BAA-159 / DSM 3647 / Goe1 / Go1 / JCM 11833 / OCM 88) (Methanosarcina frisia) protein is Methylated-DNA--protein-cysteine methyltransferase.